A 608-amino-acid polypeptide reads, in one-letter code: Elongation factor 4 (608 aa).

The tr-type G domain maps to 11–193 (DHIRNFSIVA…AIVNRLPPPK (183 aa)). GTP-binding positions include 23-28 (DHGKST) and 140-143 (NKID).

This sequence belongs to the TRAFAC class translation factor GTPase superfamily. Classic translation factor GTPase family. LepA subfamily.

The protein localises to the cell inner membrane. It carries out the reaction GTP + H2O = GDP + phosphate + H(+). Required for accurate and efficient protein synthesis under certain stress conditions. May act as a fidelity factor of the translation reaction, by catalyzing a one-codon backward translocation of tRNAs on improperly translocated ribosomes. Back-translocation proceeds from a post-translocation (POST) complex to a pre-translocation (PRE) complex, thus giving elongation factor G a second chance to translocate the tRNAs correctly. Binds to ribosomes in a GTP-dependent manner. The sequence is that of Elongation factor 4 from Agrobacterium fabrum (strain C58 / ATCC 33970) (Agrobacterium tumefaciens (strain C58)).